The chain runs to 95 residues: Aspartyl/glutamyl-tRNA(Asn/Gln) amidotransferase subunit C (95 aa).

The protein belongs to the GatC family. Heterotrimer of A, B and C subunits.

The enzyme catalyses L-glutamyl-tRNA(Gln) + L-glutamine + ATP + H2O = L-glutaminyl-tRNA(Gln) + L-glutamate + ADP + phosphate + H(+). It catalyses the reaction L-aspartyl-tRNA(Asn) + L-glutamine + ATP + H2O = L-asparaginyl-tRNA(Asn) + L-glutamate + ADP + phosphate + 2 H(+). In terms of biological role, allows the formation of correctly charged Asn-tRNA(Asn) or Gln-tRNA(Gln) through the transamidation of misacylated Asp-tRNA(Asn) or Glu-tRNA(Gln) in organisms which lack either or both of asparaginyl-tRNA or glutaminyl-tRNA synthetases. The reaction takes place in the presence of glutamine and ATP through an activated phospho-Asp-tRNA(Asn) or phospho-Glu-tRNA(Gln). This chain is Aspartyl/glutamyl-tRNA(Asn/Gln) amidotransferase subunit C, found in Rhizobium leguminosarum bv. trifolii (strain WSM2304).